Consider the following 523-residue polypeptide: GMP synthase [glutamine-hydrolyzing] (523 aa).

The region spanning 8-205 (KILILDFGSQ…VENICGCARS (198 aa)) is the Glutamine amidotransferase type-1 domain. Cys-85 serves as the catalytic Nucleophile. Active-site residues include His-179 and Glu-181. The GMPS ATP-PPase domain occupies 206-398 (WTPENIIEDA…LGLPAEMLNR (193 aa)). 233–239 (SGGVDSS) serves as a coordination point for ATP.

In terms of assembly, homodimer.

The enzyme catalyses XMP + L-glutamine + ATP + H2O = GMP + L-glutamate + AMP + diphosphate + 2 H(+). It participates in purine metabolism; GMP biosynthesis; GMP from XMP (L-Gln route): step 1/1. Its function is as follows. Catalyzes the synthesis of GMP from XMP. This Haemophilus ducreyi (strain 35000HP / ATCC 700724) protein is GMP synthase [glutamine-hydrolyzing].